Reading from the N-terminus, the 221-residue chain is Endo-1,4-beta-xylanase 11A (221 aa).

The signal sequence occupies residues 1–17 (MVSFTTLLTAVATAVSA). One can recognise a GH11 domain in the interval 28 to 218 (RGIQPGTGVH…SSGSAEIEVR (191 aa)). Asn-89 carries an N-linked (GlcNAc...) asparagine glycan. Glu-113 functions as the Nucleophile in the catalytic mechanism. Glu-205 acts as the Proton donor in catalysis.

Belongs to the glycosyl hydrolase 11 (cellulase G) family.

It is found in the secreted. It carries out the reaction Endohydrolysis of (1-&gt;4)-beta-D-xylosidic linkages in xylans.. Its pathway is glycan degradation; xylan degradation. Retains an activity of 52.5% in the presence of 5 mM SDS. Functionally, endo-1,4-beta-xylanase involved in the hydrolysis of xylan, a major structural heterogeneous polysaccharide found in plant biomass representing the second most abundant polysaccharide in the biosphere, after cellulose. Is an alkali-tolerant enzyme, exhibiting 50.6% of activity at pH 9.0, and 26.9% even at pH 10.0. This chain is Endo-1,4-beta-xylanase 11A, found in Humicola insolens (Soft-rot fungus).